Reading from the N-terminus, the 313-residue chain is MSGIDPKRFGKVAVLFGGESAEREVSLTSGRLVLQGLRDAGVDAHPFDPAERPLSALKDEGFVRAFNALHGGYGENGQIQGALDFYGIRYTGSGVLGSALGLDKFRTKLVWQQTGVPTPPFETVMRDDDYAARATEIVAKLGLPLFVKPASEGSSVAVLKVKTADALPAALAEAATHDKIVIVEKSIEGGGEYTACIAGDLDLPLIKIVPAGEFYDYHAKYVADDTQYLIPCGLPADQEAQLKRLARRAFDVLGCTDWGRADFMLDAAGNAYFLEVNTAPGMTDHSLPPKAARAIGISYSELVVKVLSLTLND.

The 201-residue stretch at 108-308 folds into the ATP-grasp domain; that stretch reads KLVWQQTGVP…YSELVVKVLS (201 aa). ATP is bound at residue 138-193; the sequence is VAKLGLPLFVKPASEGSSVAVLKVKTADALPAALAEAATHDKIVIVEKSIEGGGEY. The Mg(2+) site is built by D262, E275, and N277.

Belongs to the D-alanine--D-alanine ligase family. Mg(2+) is required as a cofactor. The cofactor is Mn(2+).

Its subcellular location is the cytoplasm. It carries out the reaction 2 D-alanine + ATP = D-alanyl-D-alanine + ADP + phosphate + H(+). Its pathway is cell wall biogenesis; peptidoglycan biosynthesis. Cell wall formation. The chain is D-alanine--D-alanine ligase from Burkholderia multivorans (strain ATCC 17616 / 249).